The following is a 70-amino-acid chain: MKFLVNVALVFMVVYISYIYAAPEPEPAPEPEAEADAEADPEAGIGAVLKVLTTGLPALINWIKRKRQQG.

Positions 1–21 (MKFLVNVALVFMVVYISYIYA) are cleaved as a signal peptide. The propeptide at 22–43 (APEPEPAPEPEAEADAEADPEA) is removed by a dipeptidylpeptidase. Position 44 is an N-formylglycine; partial (Gly44). Gln69 is subject to Glutamine amide.

Belongs to the melittin family. Monomer (in solution and for integration into membranes), homotetramer (in solution and potentially as a toroidal pore in membranes), and potenially homomultimer (as a toroidal pore in membranes). In terms of tissue distribution, expressed by the venom gland.

The protein localises to the secreted. It localises to the target cell membrane. Main toxin of bee venom with strong hemolytic activity and antimicrobial activity. It has enhancing effects on bee venom phospholipase A2 activity. This amphipathic toxin binds to negatively charged membrane surface and forms pore by inserting into lipid bilayers inducing the leakage of ions and molecules and the enhancement of permeability that ultimately leads to cell lysis. It acts as a voltage-gated pore with higher selectivity for anions over cations. The ion conductance has been shown to be voltage-dependent. Self-association of melittin in membranes is promoted by high ionic strength, but not by the presence of negatively charged lipids. In vivo, intradermal injection into healthy human volunteers produce sharp pain sensation and an inflammatory response. It produces pain by activating primary nociceptor cells directly and indirectly due to its ability to activate plasma membrane phospholipase A2 and its pore-forming activity. Shows lower cytotoxicity when tested on E.coli and cancer cell lines than melittin, as well as lower anti-inflammatory properties and lower properties to interact to small unilamellar liposomes. This is Melittin-N (MELT) from Apis cerana (Indian honeybee).